We begin with the raw amino-acid sequence, 329 residues long: Cathepsin K (329 aa).

The N-terminal stretch at 1-15 (MWGLKVLLLPVMSFA) is a signal peptide. A propeptide spans 16–114 (LYPEEILDTH…TLYIPDWEGR (99 aa)) (activation peptide). A glycan (N-linked (GlcNAc...) asparagine) is linked at N103. 3 cysteine pairs are disulfide-bonded: C136/C177, C170/C210, and C269/C318. The active site involves C139. Catalysis depends on residues H276 and N296.

It belongs to the peptidase C1 family.

It is found in the lysosome. The protein resides in the secreted. The protein localises to the apical cell membrane. The enzyme catalyses Broad proteolytic activity. With small-molecule substrates and inhibitors, the major determinant of specificity is P2, which is preferably Leu, Met &gt; Phe, and not Arg.. Functionally, thiol protease involved in osteoclastic bone resorption and may participate partially in the disorder of bone remodeling. Displays potent endoprotease activity against fibrinogen at acid pH. May play an important role in extracellular matrix degradation. Involved in the release of thyroid hormone thyroxine (T4) by limited proteolysis of TG/thyroglobulin in the thyroid follicle lumen. The sequence is that of Cathepsin K (CTSK) from Macaca fascicularis (Crab-eating macaque).